We begin with the raw amino-acid sequence, 481 residues long: MAHRILRDHEADGWERSDFPIICESCLGDNPYVRMTKANYDKECKICTRPFTVFRWRPGRDARYKKTEICQTCCKLKNVCQVCLLDLEYGLPVQVRDTALNISTHDSIPKSDVNREYFAEEHDRKARAGLDYESSFGKMRPNDTILKLQRTTPYYKRNRAHVCSFFIRGECTRGAECPYRHEMPETGELSQQNIKDRYYGVNDPVAMKLLGKAGEMGTLESPDDESIKTLYVGGLNSRILEQDIRDQFYAHGEIESIRILADKACAFVTYTSREGAEKAAQELSNRLVINGQRLKLTWGRPKPDQDGANQQGGVAHSGLLPRAVISQQHNQPPPMQQYYMHPPPANQDKPYYPSMDPQRMGAVISTQEAGGSSTENNGASSSSYMMPPHQSYPPPPYGYMPSPYQQQYPPNHHHQPSPMQHYAPPPAAYPYPQQPGPGSRPAPSPTAVSAISPDSAPAGSGAPSGSSQQAPDVSTATGSSQ.

The C3H1-type zinc finger occupies 157–184 (RNRAHVCSFFIRGECTRGAECPYRHEMP). The region spanning 228-301 (KTLYVGGLNS…QRLKLTWGRP (74 aa)) is the RRM domain. The tract at residues 329–481 (HNQPPPMQQY…DVSTATGSSQ (153 aa)) is disordered. Residues 331–345 (QPPPMQQYYMHPPPA) are compositionally biased toward pro residues. Low complexity-rich tracts occupy residues 369–389 (AGGS…MPPH) and 399–410 (YMPSPYQQQYPP). The segment covering 423–444 (APPPAAYPYPQQPGPGSRPAPS) has biased composition (pro residues). A compositionally biased stretch (low complexity) spans 449-471 (SAISPDSAPAGSGAPSGSSQQAP). Residues 472 to 481 (DVSTATGSSQ) are compositionally biased toward polar residues.

The protein is Zinc finger CCCH domain-containing protein 4 of Arabidopsis thaliana (Mouse-ear cress).